We begin with the raw amino-acid sequence, 664 residues long: DNA ligase (664 aa).

NAD(+)-binding positions include 31–35 (DSTYD), 80–81 (SL), and Glu110. Lys112 functions as the N6-AMP-lysine intermediate in the catalytic mechanism. The NAD(+) site is built by Arg133, Glu167, Lys282, and Lys306. Residues Cys400, Cys403, Cys418, and Cys423 each coordinate Zn(2+). In terms of domain architecture, BRCT spans 583–664 (QSNAPLAGKT…LLEELAKYEG (82 aa)).

Belongs to the NAD-dependent DNA ligase family. LigA subfamily. Mg(2+) serves as cofactor. It depends on Mn(2+) as a cofactor.

The catalysed reaction is NAD(+) + (deoxyribonucleotide)n-3'-hydroxyl + 5'-phospho-(deoxyribonucleotide)m = (deoxyribonucleotide)n+m + AMP + beta-nicotinamide D-nucleotide.. In terms of biological role, DNA ligase that catalyzes the formation of phosphodiester linkages between 5'-phosphoryl and 3'-hydroxyl groups in double-stranded DNA using NAD as a coenzyme and as the energy source for the reaction. It is essential for DNA replication and repair of damaged DNA. The protein is DNA ligase of Exiguobacterium sibiricum (strain DSM 17290 / CCUG 55495 / CIP 109462 / JCM 13490 / 255-15).